The chain runs to 511 residues: ATP synthase subunit alpha (511 aa).

169–176 (GDRQTGKT) lines the ATP pocket.

Belongs to the ATPase alpha/beta chains family. In terms of assembly, F-type ATPases have 2 components, CF(1) - the catalytic core - and CF(0) - the membrane proton channel. CF(1) has five subunits: alpha(3), beta(3), gamma(1), delta(1), epsilon(1). CF(0) has three main subunits: a(1), b(2) and c(9-12). The alpha and beta chains form an alternating ring which encloses part of the gamma chain. CF(1) is attached to CF(0) by a central stalk formed by the gamma and epsilon chains, while a peripheral stalk is formed by the delta and b chains.

The protein resides in the cell inner membrane. The catalysed reaction is ATP + H2O + 4 H(+)(in) = ADP + phosphate + 5 H(+)(out). In terms of biological role, produces ATP from ADP in the presence of a proton gradient across the membrane. The alpha chain is a regulatory subunit. The sequence is that of ATP synthase subunit alpha from Paracoccus denitrificans (strain Pd 1222).